Consider the following 167-residue polypeptide: Peptide deformylase (167 aa).

Positions 91 and 133 each coordinate Fe cation. The active site involves E134. H137 is a Fe cation binding site.

This sequence belongs to the polypeptide deformylase family. Fe(2+) is required as a cofactor.

It carries out the reaction N-terminal N-formyl-L-methionyl-[peptide] + H2O = N-terminal L-methionyl-[peptide] + formate. Removes the formyl group from the N-terminal Met of newly synthesized proteins. Requires at least a dipeptide for an efficient rate of reaction. N-terminal L-methionine is a prerequisite for activity but the enzyme has broad specificity at other positions. The protein is Peptide deformylase of Tolumonas auensis (strain DSM 9187 / NBRC 110442 / TA 4).